A 437-amino-acid chain; its full sequence is Transcriptional modulator WTM1 (437 aa).

One copy of the WD 1 repeat lies at 103–144 (YQGETVSKMAYLDKTGETTLLSMSKNGSLAWFKEGIKVPIHI). Threonine 187 bears the Phosphothreonine mark. Serine 200 bears the Phosphoserine mark. 3 WD repeats span residues 221–259 (PGTT…KPIW), 264–304 (PKNG…AATT), and 326–366 (AGGD…SKYN). Positions 368 to 404 (DDTIAPPQDATEESQTKSLRFLHKGGSRRSPKQIGRR) are disordered. At threonine 370 the chain carries Phosphothreonine. Residues 387–402 (RFLHKGGSRRSPKQIG) show a composition bias toward basic residues. Threonine 406 carries the post-translational modification Phosphothreonine.

As to quaternary structure, interacts with KAP122.

It localises to the cytoplasm. The protein localises to the nucleus. In terms of biological role, transcriptional modulator with roles in meiotic regulation and silencing. Acts either as an adapter to facilitate nuclear import by KAP122 of the RNR2-RNR4 heterodimer, also called beta-beta' subunit, which corresponds to the small subunit of the ribonucleotide reductase (RNR); or as an anchor to retain RNR2-RNR4 in the nucleus. In Saccharomyces cerevisiae (strain ATCC 204508 / S288c) (Baker's yeast), this protein is Transcriptional modulator WTM1 (WTM1).